Consider the following 846-residue polypeptide: Exonuclease 1 (846 aa).

Positions 1–99 are N-domain; sequence MGIQGLLQFI…RSRRERRQAN (99 aa). Residues Asp30, Asp78, Glu150, Asp152, Asp171, Asp173, Asp225, and Asp270 each coordinate Mg(2+). Positions 129–387 are interaction with MSH3; that stretch reads MAHKVIKAAR…RPESGTVSDA (259 aa). The segment at 138-229 is I-domain; it reads RSQGVDCLVA…ILSGCDYLSS (92 aa). The segment at 372–396 is disordered; sequence HRNYSPRPESGTVSDAPQLKENPST. Ser376 is subject to Phosphoserine. The span at 382 to 396 shows a compositional bias: polar residues; it reads GTVSDAPQLKENPST. The interaction with MLH1 stretch occupies residues 388-490; sequence PQLKENPSTV…NKFATFLQRK (103 aa). The Nuclear localization signal signature appears at 418 to 421; that stretch reads KRPR. Phosphoserine occurs at positions 422 and 454. Lys482 is modified (N6-acetyllysine). Thr581 carries the phosphothreonine modification. Phosphoserine is present on residues Ser598 and Ser610. The interaction with MSH2 stretch occupies residues 600-846; the sequence is PTLGTLRSCF…CGRVQRAIFQ (247 aa). Residues 618–781 form a disordered region; it reads FSRTPSPSPS…SIQKRKHHNA (164 aa). 2 stretches are compositionally biased toward polar residues: residues 620-631 and 639-654; these read RTPSPSPSTALQ and SPTS…VSQL. Thr621 carries the phosphothreonine modification. 4 positions are modified to phosphoserine: Ser623, Ser639, Ser660, and Ser674. Residues 655–671 show a composition bias toward basic and acidic residues; the sequence is KSEESSDDESHPLREEA. 3 stretches are compositionally biased toward polar residues: residues 672–689, 713–722, and 743–754; these read CSSQ…SSNA, DSQSDQTSKL, and KSSSADSLSTTK. Phosphoserine; by ATR is present on Ser714. Ser746 bears the Phosphoserine mark. Residues 787-846 are interaction with MLH1; it reads LQIKLNELWKNFGFKKDSEKLPPCKKPLSPVRDNIQLTPEAEEDIFNKPECGRVQRAIFQ.

The protein belongs to the XPG/RAD2 endonuclease family. EXO1 subfamily. In terms of assembly, interacts with the MLH1-PMS2 heterodimer via MLH1. Interacts with MSH3. Interacts with the MSH2-MSH6 heterodimer via MSH2, and this interaction may increase the processivity of the 5'-&gt;3' exonuclease activity. Interacts with PCNA, and this interaction may both stimulate the cryptic 3'-&gt;5' exonuclease activity and suppress the 5'-&gt;3' exonuclease activity. Interacts with WRN, and this interaction stimulates both the 5'-&gt;3' exonuclease activity and cleavage of 5'-overhanging flap structures. Interacts with RECQL/RECQ1, and this interaction stimulates cleavage of 5'-overhanging flap structures. Interacts with DNA helicase ZGRF1; the interaction is increased following DNA damage induction. The cofactor is Mg(2+). Phosphorylated upon DNA damage and in response to agents stalling DNA replication, probably by ATM or ATR. Phosphorylation at Ser-454, Thr-621 and Ser-714 is induced upon DNA-damage caused by treatment with hydroxyurea (HU) but not upon IR treatment. The HU-induced EXO1 triple phosphorylation facilitates destabilization/degradation of the protein. As to expression, highly expressed in bone marrow, testis and thymus. Expressed at lower levels in colon, lymph nodes, ovary, placenta, prostate, small intestine, spleen and stomach.

The protein localises to the nucleus. In terms of biological role, 5'-&gt;3' double-stranded DNA exonuclease which may also possess a cryptic 3'-&gt;5' double-stranded DNA exonuclease activity. Functions in DNA mismatch repair (MMR) to excise mismatch-containing DNA tracts directed by strand breaks located either 5' or 3' to the mismatch. Also exhibits endonuclease activity against 5'-overhanging flap structures similar to those generated by displacement synthesis when DNA polymerase encounters the 5'-end of a downstream Okazaki fragment. Required for somatic hypermutation (SHM) and class switch recombination (CSR) of immunoglobulin genes. Essential for male and female meiosis. This Homo sapiens (Human) protein is Exonuclease 1 (EXO1).